Here is a 573-residue protein sequence, read N- to C-terminus: BICD family-like cargo adapter 1 (573 aa).

The disordered stretch occupies residues 67–97 (ERPSDPGEHPQAEPGSLAEGAGPQPPPSQDP). Residues 68–77 (RPSDPGEHPQ) show a composition bias toward basic and acidic residues. The CC1 box signature appears at 113–117 (AARLG). Residues 118-376 (KALLERNQDM…QLWEAYCQVR (259 aa)) are a coiled coil. Residues 386 to 412 (DSADSAVSTDSSMDESSETSSAKDVPA) are disordered. Over residues 387–396 (SADSAVSTDS) the composition is skewed to low complexity. A coiled-coil region spans residues 440–525 (LSVEMTALKE…LEAWQDDMHR (86 aa)).

This sequence belongs to the BICDR family. As to quaternary structure, part of a tripartite complex with dynein and dynactin, acts an adapter linking the dynein motor complex and dynactin. Interacts with KIF1C. Interacts with RAB6A and RAB6B; interaction is specific to Rab6.

The protein resides in the cytoplasm. The protein localises to the cytoskeleton. It localises to the microtubule organizing center. Its subcellular location is the centrosome. In terms of biological role, acts as an adapter protein linking the dynein motor complex to various cargos and converts dynein from a non-processive to a highly processive motor in the presence of dynactin. Facilitates the interaction between dynein and dynactin and activates dynein processivity (the ability to move along a microtubule for a long distance without falling off the track). Predominantly recruits 2 dyneins, which increases both the force and speed of the microtubule motor. Component of secretory vesicle machinery in developing neurons that acts as a regulator of neurite outgrowth. Regulates the secretory vesicle transport by controlling the accumulation of Rab6-containing secretory vesicles in the pericentrosomal region restricting anterograde secretory transport during the early phase of neuronal differentiation, thereby inhibiting neuritogenesis. The protein is BICD family-like cargo adapter 1 (BICDL1) of Homo sapiens (Human).